A 324-amino-acid polypeptide reads, in one-letter code: MYG1 protein C694.04c (324 aa).

The protein belongs to the MYG1 family.

In Schizosaccharomyces pombe (strain 972 / ATCC 24843) (Fission yeast), this protein is MYG1 protein C694.04c.